Consider the following 1383-residue polypeptide: MSGTSSHESFYDSLSDMQEESKNTDFFPGLSAFLSQEEINKSLDLARRAIADSETEDFDSEKEISQIFSTSPASLCEHPSHKETKLGEHASRRPQDNRSTPVQPLAEKQTKSISSPVSKRKPAMSPLLTRPSYIRSLRKAEKRGAKTPSTNVKPKTPHQRKGGPQSQLCDKAANLIEELTSIFKAAKPRNRSPNGESSSPDSGYLSPKNQPSALLSASASQSPMEDQGEMEREVKSPGARHCYQDNQDLAVPHNRKSHPQPHSALHFPAAPRFIQKLRSQEVAEGSRVYLECRVTGNPTPRVRWFCEGKELHNTPDIQIHCEGGDLHTLIIAEAFEDDTGRYTCLATNPSGSDTTSAEVFIEGASSTDSDSESLAFKSRAGAMPQAQKKTTSVSLTIGSSSPKTGVTTAVIQPLSVPVQQVHSPTSYLCRPDGTTTAYFPPVFTKELQNTAVAEGQVVVLECRVRGAPPLQVQWFRQGSEIQDSPDFRILQKKPRSTAEPEEICTLVIAETFPEDAGIFTCSARNDYGSATSTAQLVVTSANTENCSYESMGESNNDHFQHFPPPPPILETSSLELASKKPSEIQQVNNPELGLSRAALQMQFNAAERETNGVHPSRGVNGLINGKANSNKSLPTPAVLLSPTKEPPPLLAKPKLDPLKLQQLQNQIRLEQEAGARQPPPAPRSAPPSPPFPPPPAFPELAACTPPASPEPMSALASRSAPAMQSSGSFNYARPKQFIAAQNLGPASGHGTPASSPSSSSLPSPMSPTPRQFGRAPVPPFAQPFGAEPEAPWGSSSPSPPPPPPPVFSPTAAFPVPDVFPLPPPPPPLPSPGQASHCSSPATRFGHSQTPAAFLSALLPSQPPPAAVNALGLPKGVTPAGFPKKASRTARIASDEEIQGTKDAVIQDLERKLRFKEDLLNNGQPRLTYEERMARRLLGADSATVFNIQEPEEETANQEYKVSSCEQRLISEIEYRLERSPVDESGDEVQYGDVPVENGMAPFFEMKLKHYKIFEGMPVTFTCRVAGNPKPKIYWFKDGKQISPKSDHYTIQRDLDGTCSLHTTASTLDDDGNYTIMAANPQGRISCTGRLMVQAVNQRGRSPRSPSGHPHVRRPRSRSRDSGDENEPIQERFFRPHFLQAPGDLTVQEGKLCRMDCKVSGLPTPDLSWQLDGKPVRPDSAHKMLVRENGVHSLIIEPVTSRDAGIYTCIATNRAGQNSFSLELVVAAKEAHKPPVFIEKLQNTGVADGYPVRLECRVLGVPPPQIFWKKENESLTHSTDRVSMHQDNHGYICLLIQGATKEDAGWYTVSAKNEAGIVSCTARLDVYTQWHQQSQSTKPKKVRPSASRYAALSDQGLDIKAAFQPEANPSHLTLNTALVESEDL.

Disordered stretches follow at residues Met-1–Lys-22, Asp-52–Cys-169, and Phe-183–Gly-238. A compositionally biased stretch (basic and acidic residues) spans His-78–Asp-96. Residues Arg-191–Asp-201 are compositionally biased toward polar residues. The residue at position 192 (Ser-192) is a Phosphoserine. A compositionally biased stretch (low complexity) spans Gln-210–Pro-223. Residues Pro-271–Phe-360 form the Ig-like C2-type 1 domain. Cys-292 and Cys-344 are oxidised to a cystine. Ser-401 carries the phosphoserine modification. The Ig-like C2-type 2 domain occupies Pro-440–Thr-539. Residues Cys-462 and Cys-521 are joined by a disulfide bond. Positions Phe-562–Pro-566 are interaction with VASP. Disordered stretches follow at residues Glu-609–Pro-653, Ala-673–Ser-728, and Ala-740–His-846. The residue at position 632 (Ser-632) is a Phosphoserine. Position 635 is a phosphothreonine (Thr-635). Ser-641 bears the Phosphoserine mark. The interval Pro-646–Arg-676 is interaction with LASP1. An interaction with SORBS2, SPIN90 and SRC region spans residues Arg-676–Ala-696. Over residues Gln-677–Phe-697 the composition is skewed to pro residues. Residues Ser-684, Ser-688, and Ser-728 each carry the phosphoserine modification. Positions Pro-745 to Ser-763 are enriched in low complexity. Positions Ser-766 to Pro-831 are interaction with EPS8. Positions Ser-796–Pro-831 are interaction with SORBS2, SPIN90, SRC and PFN1. Composition is skewed to pro residues over residues Pro-797–Phe-807 and Asp-817–Ser-830. Residues Phe-819–Pro-823 form an interaction with VASP region. The span at Gly-832–His-846 shows a compositional bias: polar residues. Positions Gln-833–Arg-890 are interaction with ACTN. Phosphoserine occurs at positions 893, 979, and 984. In terms of domain architecture, Ig-like C2-type 3 spans Pro-1001–Ser-1085. The tract at residues Asn-1096–Asn-1125 is disordered. A compositionally biased stretch (low complexity) spans Arg-1098 to His-1108. Phosphoserine occurs at positions 1101, 1104, 1106, and 1116. The residue at position 1118 (Ser-1118) is a Phosphoserine; by PKB/AKT1. The residue at position 1121 (Ser-1121) is a Phosphoserine. 2 consecutive Ig-like C2-type domains span residues Pro-1135–Ala-1226 and Pro-1233–Asp-1324. Interaction with EZR regions lie at residues Phe-1137–Ala-1226 and Phe-1236–Tyr-1326. Residues Cys-1156 and Cys-1208 are joined by a disulfide bond. A Phosphoserine modification is found at Ser-1352.

It belongs to the myotilin/palladin family. Interacts with EPS8. Interacts with LASP1. Interacts with VASP. Interacts with ACTN. Interacts with SORBS2. Interacts with PFN1. Interacts with LPP. Interacts with SPIN90. Interacts with SRC. Interacts with EZR. Interacts with RAI14. Phosphorylated predominantly on serines and, to a lesser extent, on tyrosines. Phosphorylation at Ser-1118 by PKB/AKT1 modulates cytoskeletal organization and cell motility. As to expression, detected in both muscle and non-muscle tissues. High expression in prostate, ovary, colon, and kidney. Not detected in spleen, skeletal muscle, lung and peripheral blood lymphocytes (at protein level). Protein is overexpressed in FA6, HPAF, IMIM-PC2, SUIT-2 and PancTu-II sporadic pancreatic cancer cell lines.

It localises to the cytoplasm. The protein resides in the cytoskeleton. The protein localises to the cell junction. Its subcellular location is the focal adhesion. It is found in the myofibril. It localises to the sarcomere. The protein resides in the z line. The protein localises to the cell projection. Its subcellular location is the ruffle. It is found in the podosome. It localises to the lamellipodium. The protein resides in the axon. The protein localises to the growth cone. Functionally, cytoskeletal protein required for organization of normal actin cytoskeleton. Roles in establishing cell morphology, motility, cell adhesion and cell-extracellular matrix interactions in a variety of cell types. May function as a scaffolding molecule with the potential to influence both actin polymerization and the assembly of existing actin filaments into higher-order arrays. Binds to proteins that bind to either monomeric or filamentous actin. Localizes at sites where active actin remodeling takes place, such as lamellipodia and membrane ruffles. Different isoforms may have functional differences. Involved in the control of morphological and cytoskeletal changes associated with dendritic cell maturation. Involved in targeting ACTN to specific subcellular foci. The polypeptide is Palladin (PALLD) (Homo sapiens (Human)).